The sequence spans 232 residues: Ornithine carbamoyltransferase (232 aa).

Carbamoyl phosphate-binding positions include Q15, R39, and 66 to 69; that span reads HPTQ. L-ornithine contacts are provided by residues N99, D163, and 167–168; that span reads SM. Carbamoyl phosphate is bound by residues 204 to 207 and T232; that span reads HCLP.

Belongs to the aspartate/ornithine carbamoyltransferase superfamily. OTCase family.

The protein resides in the cytoplasm. It carries out the reaction carbamoyl phosphate + L-ornithine = L-citrulline + phosphate + H(+). Its pathway is amino-acid biosynthesis; L-arginine biosynthesis; L-arginine from L-ornithine and carbamoyl phosphate: step 1/3. In Neisseria animalis, this protein is Ornithine carbamoyltransferase (argF).